The chain runs to 644 residues: Fidgetin-like protein 2 (644 aa).

Disordered stretches follow at residues Met-1 to Pro-36 and Ala-285 to Gly-323. A compositionally biased stretch (polar residues) spans Pro-10 to Ser-27. Over residues Ala-285–Ala-294 the composition is skewed to low complexity. ATP contacts are provided by residues Ala-390 and Gly-430–Leu-435.

This sequence belongs to the AAA ATPase family. Mg(2+) is required as a cofactor.

The protein localises to the cytoplasm. It is found in the cell cortex. It catalyses the reaction ATP + H2O = ADP + phosphate + H(+). Its function is as follows. Microtubule-severing enzyme that negatively regulates cell migration and wound healing. In migrating cells, targets dynamic microtubules (MTs) at the leading edge and severs them, thereby suppressing motility. Microtubule severing releases ARHGEF2 which activates RHOA, which in turn regulates focal ahesion turnover via focal adhesion kinase, as opposed to F-actin polymerization, to suppress cell motility. Negative regulator of axon regeneration that suppresses axonal growth by selectively severing dynamic MTs in the distal axon shaft and growth cone. Contributes to proper cell branching during endothelial and neuronal development. The polypeptide is Fidgetin-like protein 2 (Fignl2) (Mus musculus (Mouse)).